We begin with the raw amino-acid sequence, 899 residues long: UPF0182 protein Mhun_1303 (899 aa).

The next 7 membrane-spanning stretches (helical) occupy residues 6 to 26 (LLIF…DLLS), 39 to 59 (VFLT…LLFF), 93 to 113 (VAAG…LAFL), 136 to 156 (LPFY…TLII), 196 to 216 (FLPQ…AFLW), 240 to 260 (ITIP…LLFL), and 271 to 291 (IAYG…AGFL).

This sequence belongs to the UPF0182 family.

Its subcellular location is the cell membrane. The chain is UPF0182 protein Mhun_1303 from Methanospirillum hungatei JF-1 (strain ATCC 27890 / DSM 864 / NBRC 100397 / JF-1).